Here is an 80-residue protein sequence, read N- to C-terminus: Small ribosomal subunit protein bS16c (80 aa).

Belongs to the bacterial ribosomal protein bS16 family.

The protein localises to the plastid. It is found in the chloroplast. The polypeptide is Small ribosomal subunit protein bS16c (Lotus japonicus (Lotus corniculatus var. japonicus)).